The sequence spans 509 residues: MDEYEAQLVAVEQALENTTDEQQREELSTLRTNLQELLALTRETEADQTAQQGDILDDELLRLKSELNELEEAAANVGATKNKDEEQQLKDLRAKYNALVGEKCSAPHEHSWGASSYHNALICGVDDEVIINRNSELDVRLRVLYINPTHCEMLPCNYYLEGECRFDEIRCRYSHGALVPGASIKSYIPPDFPRLARNCPVLAKMPDRLWHRGRVLCANFVEQTCRVRLDGQDHKERERDFQFEELFPLITEKEDELTSEDSSSSPHDESSDEIDSDMDDLEAAHRSRMVELSLFTFKPTEKLGAWEQYTRGIGSKLMEKMGYIHGTGLGSEGRGIVTPVSAQILPQGRSLDACMELREAANGDQDYFSVERKLKREQRRQNKANEKAYARETQRTDVFSFLNGSVLGGGESRHQGDQAAKKAKTNDLQQHSTKTLNVETVRVADDIRRKQRDIAKVKQSLDRNATDIQLQKRLHMQLQSQKQELATLQAHEHRLSKEQHTRKNKMFEF.

The C3H1-type zinc-finger motif lies at 155–178; the sequence is PCNYYLEGECRFDEIRCRYSHGAL. The interval 254–277 is disordered; the sequence is EDELTSEDSSSSPHDESSDEIDSD. In terms of domain architecture, G-patch spans 310–356; it reads TRGIGSKLMEKMGYIHGTGLGSEGRGIVTPVSAQILPQGRSLDACME. The tract at residues 407–430 is disordered; sequence LGGGESRHQGDQAAKKAKTNDLQQ. Residues 411–420 are compositionally biased toward basic and acidic residues; it reads ESRHQGDQAA.

Its subcellular location is the nucleus. In terms of biological role, transcription repressor. The sequence is that of Zinc finger CCCH-type with G patch domain-containing protein from Drosophila pseudoobscura pseudoobscura (Fruit fly).